The primary structure comprises 371 residues: NADH-ubiquinone oxidoreductase chain 1 (371 aa).

A run of 10 helical transmembrane segments spans residues 7–27, 44–64, 77–97, 109–129, 153–173, 180–200, 226–246, 263–283, 302–322, and 338–358; these read IISI…VAYV, PNAV…KLLL, LFFL…AVIP, LGIL…LLAG, LVLS…NLGV, AVLF…GSIA, AVVF…MCIL, VFNI…NWMV, GWLY…IFIL, and FCWT…PCIL.

Belongs to the complex I subunit 1 family.

The protein resides in the mitochondrion inner membrane. It catalyses the reaction a ubiquinone + NADH + 5 H(+)(in) = a ubiquinol + NAD(+) + 4 H(+)(out). In terms of biological role, core subunit of the mitochondrial membrane respiratory chain NADH dehydrogenase (Complex I) that is believed to belong to the minimal assembly required for catalysis. Complex I functions in the transfer of electrons from NADH to the respiratory chain. The immediate electron acceptor for the enzyme is believed to be ubiquinone. The protein is NADH-ubiquinone oxidoreductase chain 1 (ndh-1) of Neurospora crassa (strain ATCC 24698 / 74-OR23-1A / CBS 708.71 / DSM 1257 / FGSC 987).